Consider the following 882-residue polypeptide: MAKIRVHELAKELGIASKEMVEVLVELGLDVKNHMSTIEDSQASWVKKRLSKSDEDSKKQPAQPVTRDEAVKKHSGEPATQTTQKKPDNPRHVSGPRPQEGSKPSGSTGRREFSENREQSRKGEERHSANPRPGTQMKSPRNNAPRPTTRPENRSAGATGRTDNRAPGAAGRTDNRAPGAVGRTDNRGAGSASRPDNRVTRPAAGRPDNKGSRPSDAKRPPQRTVPGNTPRPVSSPERTTEKKPGEASRTLPGGAKTAGDKKAFRKNTPAFGQYQSKDYSRPGRKSKHKRKKENIEFQTPENIKIEGSIMVRDLAEKLNKNPAEIMKKLMELGIMATINQNIDFETAEIVSSLYDVKVERELSEEEKILEELVDIDDDAELIARPPVVTIMGHVDHGKTSLLDRIRQANVVSGEAGGITQHIGAYQVTIKNNKITFIDTPGHEAFTAMRARGANLTDIVILVVAADDGVMPQTVEAINHIRAAKVPFLVAINKIDKPQADPERIKQQLTEYNIVPEEWGGDTIFVPVSAKSGEGIENLLEMILLVAEMNEIRANPDRAAYGLVVEGELDKGRGAVATVLVLNGTLNIGDYIICGTNWCRVRAMIDDRGKRVDKALPSMPVEIMGWSGVPEAGGKVQVCDEKVAKEIIGLRLSEKKIEEQKQSSRVSLDEFFQQMKDAEVKELTLIIKGDVQGSVEALRQSLLRLATNEVKVNVIHSAVGAITETDVMLASASNAIIIGFNVRPDSKARKYAEDEKIDVRMYRVIYEAIDDVKKAMSGLLDPEYKEKFLGRAEVRALFKVPHVGVIAGSYVIDGKIQRNASVRVLRDGVIVYEGQLSSLKRFKDDAKEVVENYECGIGIKDFNDVKEGDIIEAYTLEEIPREL.

Residues isoleucine 38–asparagine 294 form a disordered region. 3 stretches are compositionally biased toward basic and acidic residues: residues threonine 66 to glycine 76, glycine 109 to serine 128, and proline 207 to arginine 219. The segment covering proline 282–lysine 292 has biased composition (basic residues). Residues alanine 383–aspartate 556 enclose the tr-type G domain. Residues glycine 392–threonine 399 are G1. Glycine 392–threonine 399 contributes to the GTP binding site. The interval glycine 417–histidine 421 is G2. The interval aspartate 438–glycine 441 is G3. GTP contacts are provided by residues aspartate 438 to histidine 442 and asparagine 492 to aspartate 495. The tract at residues asparagine 492–aspartate 495 is G4. The tract at residues serine 528 to lysine 530 is G5.

The protein belongs to the TRAFAC class translation factor GTPase superfamily. Classic translation factor GTPase family. IF-2 subfamily.

Its subcellular location is the cytoplasm. Functionally, one of the essential components for the initiation of protein synthesis. Protects formylmethionyl-tRNA from spontaneous hydrolysis and promotes its binding to the 30S ribosomal subunits. Also involved in the hydrolysis of GTP during the formation of the 70S ribosomal complex. The protein is Translation initiation factor IF-2 of Syntrophomonas wolfei subsp. wolfei (strain DSM 2245B / Goettingen).